The sequence spans 388 residues: Putative 8-amino-7-oxononanoate synthase (388 aa).

Arg-23 lines the substrate pocket. 110–111 (GY) is a pyridoxal 5'-phosphate binding site. His-135 is a substrate binding site. Residues Ser-182, 207–210 (DDAH), and 238–241 (TLSK) contribute to the pyridoxal 5'-phosphate site. At Lys-241 the chain carries N6-(pyridoxal phosphate)lysine. A substrate-binding site is contributed by Thr-355.

It belongs to the class-II pyridoxal-phosphate-dependent aminotransferase family. BioF subfamily. In terms of assembly, homodimer. Pyridoxal 5'-phosphate is required as a cofactor.

It carries out the reaction 6-carboxyhexanoyl-[ACP] + L-alanine + H(+) = (8S)-8-amino-7-oxononanoate + holo-[ACP] + CO2. It participates in cofactor biosynthesis; biotin biosynthesis. In terms of biological role, catalyzes the decarboxylative condensation of pimeloyl-[acyl-carrier protein] and L-alanine to produce 8-amino-7-oxononanoate (AON), [acyl-carrier protein], and carbon dioxide. This is Putative 8-amino-7-oxononanoate synthase (bioF) from Thermodesulfovibrio yellowstonii (strain ATCC 51303 / DSM 11347 / YP87).